A 219-amino-acid polypeptide reads, in one-letter code: Kappa-scoloptoxin(11)-Ss1a (219 aa).

The signal sequence occupies residues 1-16 (MFYSHLLFFTFTFACS). Positions 17–25 (SSLNRKTKR) are excised as a propeptide.

Post-translationally, contains 8 disulfide bonds. In terms of tissue distribution, expressed by the venom gland.

The protein localises to the secreted. Functionally, voltage-gated potassium channel inhibitor. This Scolopendra dehaani (Thai centipede) protein is Kappa-scoloptoxin(11)-Ss1a.